The sequence spans 351 residues: Adenine deaminase (351 aa).

3 residues coordinate Zn(2+): His20, His22, and His200. The active-site Proton donor is Glu203. Asp281 contacts Zn(2+). Asp282 serves as a coordination point for substrate.

It belongs to the metallo-dependent hydrolases superfamily. Adenosine and AMP deaminases family. Adenine deaminase type 2 subfamily. Zn(2+) is required as a cofactor.

It catalyses the reaction adenine + H2O + H(+) = hypoxanthine + NH4(+). Catalyzes the hydrolytic deamination of adenine to hypoxanthine. Plays an important role in the purine salvage pathway and in nitrogen catabolism. The chain is Adenine deaminase from Cupriavidus pinatubonensis (strain JMP 134 / LMG 1197) (Cupriavidus necator (strain JMP 134)).